The primary structure comprises 747 residues: Ferrichrome outer membrane transporter/phage receptor (747 aa).

The first 33 residues, 1–33 (MARSKTAQPKHSLRKIAVVVATAVSGMSVYAQA), serve as a signal peptide directing secretion. The Periplasmic segment spans residues 34 to 192 (AVEPKEDTIT…NMVSKRPTTE (159 aa)). The short motif at 40–47 (DTITVTAA) is the TonB box element. Positions 75 to 187 (PIQKVPQSIS…PGGLLNMVSK (113 aa)) constitute a TBDR plug domain. Ferrichrome contacts are provided by residues R114, Q133, and 148–149 (FY). The TBDR beta-barrel domain maps to 192 to 747 (EPLKEVQFKA…QVVATATFRF (556 aa)). A beta stranded membrane pass occupies residues 193–201 (PLKEVQFKA). At 202-206 (GTDSL) the chain is on the extracellular side. Residues 207 to 215 (FQTGFDFSD) form a beta stranded membrane-spanning segment. The Periplasmic portion of the chain corresponds to 216–222 (SLDDDGV). Residues 223–231 (YSYRLTGLA) form a beta stranded membrane-spanning segment. Residues 232–245 (RSANAQQKGSEEQR) lie on the Extracellular side of the membrane. Residues 246–255 (YAIAPAFTWR) traverse the membrane as a beta stranded segment. The Periplasmic segment spans residues 256 to 259 (PDDK). Residues 260-268 (TNFTFLSYF) traverse the membrane as a beta stranded segment. Over 269–312 (QNEPETGYYGWLPKEGTVEPLPNGKRLPTDFNEGAKNNTYSRNE) the chain is Extracellular. 277 to 279 (YGW) contacts ferrichrome. Residues 313–321 (KMVGYSFDH) traverse the membrane as a beta stranded segment. The Periplasmic segment spans residues 322 to 326 (EFNDT). Residues 327–335 (FTVRQNLRF) form a beta stranded membrane-spanning segment. At 336-387 (AENKTSQNSVYGYGVCSDPANAYSKQCAALAPADKGHYLARKYVVDDEKLQN) the chain is on the extracellular side. 346–348 (YGY) contacts ferrichrome. An intrachain disulfide couples C351 to C362. The beta stranded transmembrane segment at 388 to 396 (FSVDTQLQS) threads the bilayer. Topologically, residues 397 to 404 (KFATGDID) are periplasmic. The chain crosses the membrane as a beta stranded span at residues 405–413 (HTLLTGVDF). Over 414-464 (MRMRNDINAWFGYDDSVPLLNLYNPVNTDFDFNAKDPANSGPYRILNKQKQ) the chain is Extracellular. Position 424 (F424) interacts with ferrichrome. Residues 465 to 473 (TGVYVQDQA) traverse the membrane as a beta stranded segment. Topologically, residues 474–477 (QWDK) are periplasmic. The chain crosses the membrane as a beta stranded span at residues 478-486 (VLVTLGGRY). Topologically, residues 487 to 508 (DWADQESLNRVAGTTDKRDDKQ) are extracellular. Residues 509–517 (FTWRGGVNY) form a beta stranded membrane-spanning segment. Residues 518–522 (LFDNG) are Periplasmic-facing. Residues 523–531 (VTPYFSYSE) form a beta stranded membrane-spanning segment. Topologically, residues 532-551 (SFEPSSQVGKDGNIFAPSKG) are extracellular. A beta stranded membrane pass occupies residues 552–560 (KQYEVGVKY). The Periplasmic portion of the chain corresponds to 561–565 (VPEDR). The beta stranded transmembrane segment at 566 to 574 (PIVVTGAVY) threads the bilayer. The Extracellular portion of the chain corresponds to 575 to 601 (NLTKTNNLMADPEGSFFSVEGGEIRAR). A beta stranded transmembrane segment spans residues 602–610 (GVEIEAKAA). Residues 611 to 613 (LSA) lie on the Periplasmic side of the membrane. The beta stranded transmembrane segment at 614 to 622 (SVNVVGSYT) threads the bilayer. Residues 623 to 645 (YTDAEYTTDTTYKGNTPAQVPKH) lie on the Extracellular side of the membrane. Residues 646–654 (MASLWADYT) traverse the membrane as a beta stranded segment. At 655 to 661 (FFDGPLS) the chain is on the periplasmic side. Residues 662-670 (GLTLGTGGR) traverse the membrane as a beta stranded segment. Topologically, residues 671–689 (YTGSSYGDPANSFKVGSYT) are extracellular. Residues 690–698 (VVDALVRYD) form a beta stranded membrane-spanning segment. Residues 699–705 (LARVGMA) lie on the Periplasmic side of the membrane. Residues 706 to 714 (GSNVALHVN) traverse the membrane as a beta stranded segment. The Extracellular portion of the chain corresponds to 715 to 737 (NLFDREYVASCFNTYGCFWGAER). A disulfide bond links C725 and C731. The short motif at 730–747 (GCFWGAERQVVATATFRF) is the TonB C-terminal box element. A ferrichrome-binding site is contributed by A735. Residues 738–746 (QVVATATFR) traverse the membrane as a beta stranded segment. F747 is a topological domain (periplasmic).

This sequence belongs to the TonB-dependent receptor family. In terms of assembly, monomer. Interacts with TonB. Interacts with Escherichia phage T5 receptor-binding protein pb5 (RBP-pb5); this interaction is necessary for the entry of the viral genome into the host cell.

The protein resides in the cell outer membrane. Binding of ferrichrome or colicin M enhances the interaction between FhuA and TonB. TonB activates FhuA through interaction with the beta-barrel. In terms of biological role, involved in the uptake of iron in complex with ferrichrome, a hydroxamate-type siderophore. Binds and transports ferrichrome-iron across the outer membrane. In addition to its role in ferrichrome-iron transport, transports the antibiotic albomycin, which is a structural analog of ferrichrome, and acts as a receptor for colicin M, microcin J25 and bacteriophages T1, T5, phi80 and UC-1. The energy source, which is required for all FhuA functions except infection by phage T5, is provided by the inner membrane TonB system. The chain is Ferrichrome outer membrane transporter/phage receptor from Escherichia coli (strain K12).